Here is a 706-residue protein sequence, read N- to C-terminus: Catalase HPII (706 aa).

Residues His-77 and Asn-151 contribute to the active site. A heme-binding site is contributed by Tyr-365. The interval 512–532 (EPPEEQVDESAPVSPALSQVT) is disordered.

This sequence belongs to the catalase family. HPII subfamily. Heme is required as a cofactor.

It is found in the cytoplasm. It catalyses the reaction 2 H2O2 = O2 + 2 H2O. In terms of biological role, decomposes hydrogen peroxide into water and oxygen; serves to protect cells from the toxic effects of hydrogen peroxide. This is Catalase HPII (katE) from Mycobacterium avium.